Here is a 405-residue protein sequence, read N- to C-terminus: NADH-quinone oxidoreductase subunit D (405 aa).

This sequence belongs to the complex I 49 kDa subunit family. NDH-1 is composed of 14 different subunits. Subunits NuoB, C, D, E, F, and G constitute the peripheral sector of the complex.

Its subcellular location is the cell inner membrane. It catalyses the reaction a quinone + NADH + 5 H(+)(in) = a quinol + NAD(+) + 4 H(+)(out). Its function is as follows. NDH-1 shuttles electrons from NADH, via FMN and iron-sulfur (Fe-S) centers, to quinones in the respiratory chain. The immediate electron acceptor for the enzyme in this species is believed to be ubiquinone. Couples the redox reaction to proton translocation (for every two electrons transferred, four hydrogen ions are translocated across the cytoplasmic membrane), and thus conserves the redox energy in a proton gradient. This chain is NADH-quinone oxidoreductase subunit D, found in Afipia carboxidovorans (strain ATCC 49405 / DSM 1227 / KCTC 32145 / OM5) (Oligotropha carboxidovorans).